A 330-amino-acid polypeptide reads, in one-letter code: MTSNLEAQLLALRQEGEQAIAAADTLERLEELRVSYLGKKGQLGALLRSMGQMSAEERPKIGAIANTVKEALQASLDKQRESLESAQIQAQLDAETLDVTMPGIYKPQGRIHPLNGIIDRALDVFVGLGYTVAQGLEMETDYYNFEALNTPPDHPARDMQDTFYLPDGNLLRTHTSSVQIRYMEKEEPPIHIVAPGRVYRRDNVDATHSAVFHQIELLAIDEGLTFTDLKGTIKVFLQAMFGDLPIRFRASYFPFTEPSAEVDLQWNGRWLEVMGCGMVDPNVMKSVGYNPEIYTGFAAGFGVERFAMVLHQIDDIRRLYASDLRFLRQF.

Residue Glu-257 participates in Mg(2+) binding.

This sequence belongs to the class-II aminoacyl-tRNA synthetase family. Phe-tRNA synthetase alpha subunit type 1 subfamily. In terms of assembly, tetramer of two alpha and two beta subunits. Requires Mg(2+) as cofactor.

It localises to the cytoplasm. It carries out the reaction tRNA(Phe) + L-phenylalanine + ATP = L-phenylalanyl-tRNA(Phe) + AMP + diphosphate + H(+). This is Phenylalanine--tRNA ligase alpha subunit from Nostoc sp. (strain PCC 7120 / SAG 25.82 / UTEX 2576).